The following is a 727-amino-acid chain: Alpha-1,3-galactosidase A (727 aa).

Positions 220 to 241 (ATNRTWRTSNPVFPERHEDHRP) are disordered. A compositionally biased stretch (polar residues) spans 221-230 (TNRTWRTSNP). PbH1 repeat units lie at residues 336-358 (KGTV…NIHG), 461-483 (TPTV…LVTT), 484-506 (RRPV…YISS), 517-538 (VRNV…IFFD), 551-572 (HRNV…LSGR), and 574-603 (VGGL…RVGD).

This sequence belongs to the glycosyl hydrolase 110 family. A subfamily.

It carries out the reaction Hydrolysis of terminal, non-reducing branched (1-&gt;3)-alpha-D-galactosidic residues, producing free D-galactose.. The enzyme catalyses Hydrolysis of terminal, non-reducing alpha-D-galactose residues in alpha-D-galactosides, including galactose oligosaccharides, galactomannans and galactolipids.. Its function is as follows. Alpha-galactosidase that specifically removes branched alpha-1,3-linked galactose residues present in blood group B antigens. Has no activity toward linear alpha-1,3-linked galactose residues. This is Alpha-1,3-galactosidase A (glaA) from Peterkaempfera griseoplana (Streptacidiphilus griseoplanus).